We begin with the raw amino-acid sequence, 78 residues long: uncharacterized protein (78 aa).

This is an uncharacterized protein from Methanocaldococcus jannaschii (strain ATCC 43067 / DSM 2661 / JAL-1 / JCM 10045 / NBRC 100440) (Methanococcus jannaschii).